A 232-amino-acid polypeptide reads, in one-letter code: Aprataxin-like protein (232 aa).

The HIT domain occupies 38 to 160 (LKVYIESPES…MTLDHVSPSL (123 aa)). 3 interaction with DNA regions span residues 63 to 67 (DMFPK), 138 to 149 (HAGPSMNNLHLH), and 161 to 165 (KNSAH). The active-site Nucleophile is histidine 147. Cysteine 200 and cysteine 203 together coordinate Zn(2+). The tract at residues 209-212 (RHFT) is interaction with DNA. Zn(2+)-binding residues include histidine 217 and glutamate 221.

Monomer.

The protein localises to the nucleus. It localises to the cytoplasm. The enzyme catalyses a 5'-end adenosine-5'-diphospho-5'-2'-deoxyribonucleoside-DNA + H2O = a 5'-end 5'-phospho-2'-deoxyribonucleoside-DNA + AMP + 2 H(+). It carries out the reaction a 5'-end adenosine-5'-diphospho-5'-ribonucleoside-2'-deoxyribonucleotide-DNA + H2O = a 5'-end 5'-phospho-ribonucleoside-2'-deoxyribonucleotide-DNA + AMP + 2 H(+). It catalyses the reaction a 3'-end 2'-deoxyribonucleotide-3'-diphospho-5'-guanosine-DNA + H2O = a 3'-end 2'-deoxyribonucleotide 3'-phosphate-DNA + GMP + 2 H(+). Its function is as follows. DNA-binding protein involved in single-strand DNA break repair, double-strand DNA break repair and base excision repair. Resolves abortive DNA ligation intermediates formed either at base excision sites, or when DNA ligases attempt to repair non-ligatable breaks induced by reactive oxygen species. Catalyzes the release of adenylate groups covalently linked to 5'-phosphate termini, resulting in the production of 5'-phosphate termini that can be efficiently rejoined. Likewise, catalyzes the release of 3'-linked guanosine (DNAppG) and inosine (DNAppI) from DNA, but has higher specific activity with 5'-linked adenosine (AppDNA). This is Aprataxin-like protein (hnt3) from Schizosaccharomyces pombe (strain 972 / ATCC 24843) (Fission yeast).